The sequence spans 1043 residues: Integrator complex subunit 3 (1043 aa).

Met1 carries the post-translational modification N-acetylmethionine. Residues Ser502, Ser537, and Ser995 each carry the phosphoserine modification. Residues 977–1043 (YEDSSTKPPK…GSSAVGSDSD (67 aa)) are disordered. Over residues 1008 to 1022 (AEEESGSSSASEEED) the composition is skewed to acidic residues.

Belongs to the Integrator subunit 3 family. In terms of assembly, component of the Integrator complex, composed of core subunits INTS1, INTS2, INTS3, INTS4, INTS5, INTS6, INTS7, INTS8, INTS9/RC74, INTS10, INTS11/CPSF3L, INTS12, INTS13, INTS14 and INTS15. The core complex associates with protein phosphatase 2A subunits PPP2CA and PPP2R1A, to form the Integrator-PP2A (INTAC) complex. Component of the SOSS complex, composed of SOSS-B (SOSS-B1/NABP2 or SOSS-B2/NABP1), SOSS-A/INTS3 and SOSS-C/INIP. SOSS complexes containing SOSS-B1/NABP2 are more abundant than complexes containing SOSS-B2/NABP1. Interacts with SOSS-B1/NABP2, SOSS-B2/NABP1 and SOSS-C/INIP; the interaction is direct. Interacts with NBN/NBS1.

The protein resides in the nucleus. It is found in the cytoplasm. Component of the integrator complex, a multiprotein complex that terminates RNA polymerase II (Pol II) transcription in the promoter-proximal region of genes. The integrator complex provides a quality checkpoint during transcription elongation by driving premature transcription termination of transcripts that are unfavorably configured for transcriptional elongation: the complex terminates transcription by (1) catalyzing dephosphorylation of the C-terminal domain (CTD) of Pol II subunit POLR2A/RPB1 and SUPT5H/SPT5, (2) degrading the exiting nascent RNA transcript via endonuclease activity and (3) promoting the release of Pol II from bound DNA. The integrator complex is also involved in terminating the synthesis of non-coding Pol II transcripts, such as enhancer RNAs (eRNAs), small nuclear RNAs (snRNAs), telomerase RNAs and long non-coding RNAs (lncRNAs). Within the integrator complex, INTS3 is involved in the post-termination step: INTS3 binds INTS7 in the open conformation of integrator complex and prevents the rebinding of Pol II to the integrator after termination cycle. Mediates recruitment of cytoplasmic dynein to the nuclear envelope, probably as component of the integrator complex. Its function is as follows. Component of the SOSS complex, a multiprotein complex that functions downstream of the MRN complex to promote DNA repair and G2/M checkpoint. The SOSS complex associates with single-stranded DNA at DNA lesions and influences diverse endpoints in the cellular DNA damage response including cell-cycle checkpoint activation, recombinational repair and maintenance of genomic stability. The SOSS complex is required for efficient homologous recombination-dependent repair of double-strand breaks (DSBs) and ATM-dependent signaling pathways. In the SOSS complex, it is required for the assembly of the complex and for stabilization of the complex at DNA damage sites. The chain is Integrator complex subunit 3 (INTS3) from Pongo abelii (Sumatran orangutan).